Reading from the N-terminus, the 408-residue chain is DNA primase DnaG (408 aa).

Residues 172–248 (DSIIIVEGRA…HVDYIARAPP (77 aa)) form the Toprim domain. Glu178, Asp222, and Asp224 together coordinate Mg(2+). The disordered stretch occupies residues 279–304 (AAGEKAETPQQPPPQQPVPQQEVREE).

This sequence belongs to the archaeal DnaG primase family. As to quaternary structure, forms a ternary complex with MCM helicase and DNA. Component of the archaeal exosome complex. It depends on Mg(2+) as a cofactor.

It carries out the reaction ssDNA + n NTP = ssDNA/pppN(pN)n-1 hybrid + (n-1) diphosphate.. Functionally, RNA polymerase that catalyzes the synthesis of short RNA molecules used as primers for DNA polymerase during DNA replication. Also part of the exosome, which is a complex involved in RNA degradation. Acts as a poly(A)-binding protein that enhances the interaction between heteromeric, adenine-rich transcripts and the exosome. The protein is DNA primase DnaG of Pyrobaculum aerophilum (strain ATCC 51768 / DSM 7523 / JCM 9630 / CIP 104966 / NBRC 100827 / IM2).